Here is a 180-residue protein sequence, read N- to C-terminus: Large ribosomal subunit protein uL5 (180 aa).

Belongs to the universal ribosomal protein uL5 family. In terms of assembly, part of the 50S ribosomal subunit; part of the 5S rRNA/L5/L18/L25 subcomplex. Contacts the 5S rRNA and the P site tRNA. Forms a bridge to the 30S subunit in the 70S ribosome.

In terms of biological role, this is one of the proteins that bind and probably mediate the attachment of the 5S RNA into the large ribosomal subunit, where it forms part of the central protuberance. In the 70S ribosome it contacts protein S13 of the 30S subunit (bridge B1b), connecting the 2 subunits; this bridge is implicated in subunit movement. Contacts the P site tRNA; the 5S rRNA and some of its associated proteins might help stabilize positioning of ribosome-bound tRNAs. The sequence is that of Large ribosomal subunit protein uL5 from Xanthomonas oryzae pv. oryzae (strain MAFF 311018).